Reading from the N-terminus, the 343-residue chain is Small ribosomal subunit biogenesis GTPase RsgA (343 aa).

One can recognise a CP-type G domain in the interval 116 to 275; it reads RGQLKPVAAN…LIDSPGIREF (160 aa). Residues 163–166 and 217–225 contribute to the GTP site; these read NKAD and GQSGVGKSS. Residues Cys299, Cys304, His306, and Cys312 each coordinate Zn(2+).

It belongs to the TRAFAC class YlqF/YawG GTPase family. RsgA subfamily. Monomer. Associates with 30S ribosomal subunit, binds 16S rRNA. Zn(2+) serves as cofactor.

Its subcellular location is the cytoplasm. Its function is as follows. One of several proteins that assist in the late maturation steps of the functional core of the 30S ribosomal subunit. Helps release RbfA from mature subunits. May play a role in the assembly of ribosomal proteins into the subunit. Circularly permuted GTPase that catalyzes slow GTP hydrolysis, GTPase activity is stimulated by the 30S ribosomal subunit. The sequence is that of Small ribosomal subunit biogenesis GTPase RsgA from Pseudomonas savastanoi pv. phaseolicola (strain 1448A / Race 6) (Pseudomonas syringae pv. phaseolicola (strain 1448A / Race 6)).